The chain runs to 200 residues: ATP-dependent Clp protease proteolytic subunit (200 aa).

The active-site Nucleophile is the S105. H130 is an active-site residue.

This sequence belongs to the peptidase S14 family. Fourteen ClpP subunits assemble into 2 heptameric rings which stack back to back to give a disk-like structure with a central cavity, resembling the structure of eukaryotic proteasomes.

It is found in the cytoplasm. The catalysed reaction is Hydrolysis of proteins to small peptides in the presence of ATP and magnesium. alpha-casein is the usual test substrate. In the absence of ATP, only oligopeptides shorter than five residues are hydrolyzed (such as succinyl-Leu-Tyr-|-NHMec, and Leu-Tyr-Leu-|-Tyr-Trp, in which cleavage of the -Tyr-|-Leu- and -Tyr-|-Trp bonds also occurs).. Functionally, cleaves peptides in various proteins in a process that requires ATP hydrolysis. Has a chymotrypsin-like activity. Plays a major role in the degradation of misfolded proteins. In Hydrogenovibrio crunogenus (strain DSM 25203 / XCL-2) (Thiomicrospira crunogena), this protein is ATP-dependent Clp protease proteolytic subunit.